A 571-amino-acid polypeptide reads, in one-letter code: MDHTAPTYMLANLTHLHSEQLLQGLNLLRQHHELCDIILRVGDVKIHAHKVVLASISPYFKAMFTGNLSEKENSEVEFQCIDEAALQAIVEYAYTGTVFISQDTVESLLPAANLLQIKLVLKECCAFLESQLDPGNCIGISRFAETYGCHDLYLAATKFICQNFESVCQTEEFFELTHADLDEIVSNDCLNVATEETVFYALESWIKYDVQERQKYLAQLLNSVRLPLLSVKFLTRLYEANHLIRDDRTCKHLLNEALKYHFMPEHRLSHQTVLMTRPRCAPKVLCAVGGKSGLFACLDSVEMYFPQNDSWIGLAPLNIPRYEFGICVLDQKVFVIGGIETSVRPGMTVRKHENSVECWNPDTNTWTSLERMNESRSTLGVAVLAGEVFALGGYDGQSYLQSVEKYIPKIRQWQPVAPMTTTRSCFAAAVLDGMLYAIGGYGPAHMNSVERYDPSKDSWEMVAPMADKRIHFGVGVMLGFIFVVGGHNGVSHLSSIERYDPHQNQWTVCRPMKEPRTGVGAAVIDNYLYVVGGHSGSSYLNTVQKYDPISDTWLDSAGMIYCRCNFGLTAL.

In terms of domain architecture, BTB spans Cys-35–Gln-102. Kelch repeat units lie at residues Val-284–Gln-331, Lys-332–Gly-386, Glu-387–Gly-433, Leu-435–Gly-479, Phe-480–Asn-526, and Leu-528–Ala-570.

This chain is Kelch-like protein 28 (Klhl28), found in Mus musculus (Mouse).